The chain runs to 111 residues: Nucleoid-associated protein glr3498 (111 aa).

It belongs to the YbaB/EbfC family. In terms of assembly, homodimer.

It is found in the cytoplasm. The protein resides in the nucleoid. Binds to DNA and alters its conformation. May be involved in regulation of gene expression, nucleoid organization and DNA protection. The sequence is that of Nucleoid-associated protein glr3498 from Gloeobacter violaceus (strain ATCC 29082 / PCC 7421).